Here is a 631-residue protein sequence, read N- to C-terminus: MQDLPSSIADISDPELLGQWLEKYNEAYRAGKPMISDAHYDLLVERLREIAPDHGFLSAVEAETFADKREVRHPAPMLSTEKAYDKQSLERFVERVYKEAAQIGVTDVLFQVTPKLDGLAARDDGQILATRGNGYAGYDITNALEKGVIPQGGRGLGLGEIVAVQSYFQENLADRFEHPRNMVVGIISSDVLNISAKQALEDKQVHFVPYATLNKWEGSGKELLENSEKITQDLIQATDYPMDGMVASVMNQDVRDHMGATSHHYRWQIAIKAKGETGVTTVNAITWQVGRTGNVTPVLEVEPLKLSGATIRRVTAHNAGRIREKGAGVGASIEVIRSGEVIPKLENVLTPSDDTLIPENCPVCETPLEWNNDFLKCPNLNCKARVEQRIRHWFRILGNADWFGIKTVERLVAGGFDSLEKIYAMTEEDFLSLEFGPVQSKNLAEAINLSKSRPVEDWRFLAAFGISDLGEGDSRKILSFFPLEELLDKTRDDIVALHGFGDVTSISIEKGLKALGPTIRHMLDLGFNLQPTPLKSEMDVSSPISGKGVVFTGSMETGSRKDMEENARSLGANVQKAVTGKTDYLICGAKVGAKKTQKAQDLGVTVLTEQEYLQLVEGGESQSSPEQMSLF.

NAD(+) is bound by residues 37 to 41 (DAHYD) and 79 to 80 (ST). The active-site N6-AMP-lysine intermediate is the lysine 115. Residues arginine 131, glutamate 160, and lysine 272 each coordinate NAD(+). Residues cysteine 361, cysteine 364, cysteine 377, and cysteine 382 each coordinate Zn(2+). Positions 539–630 (DVSSPISGKG…SQSSPEQMSL (92 aa)) constitute a BRCT domain.

It belongs to the NAD-dependent DNA ligase family. LigA subfamily. Mg(2+) serves as cofactor. It depends on Mn(2+) as a cofactor.

It catalyses the reaction NAD(+) + (deoxyribonucleotide)n-3'-hydroxyl + 5'-phospho-(deoxyribonucleotide)m = (deoxyribonucleotide)n+m + AMP + beta-nicotinamide D-nucleotide.. Functionally, DNA ligase that catalyzes the formation of phosphodiester linkages between 5'-phosphoryl and 3'-hydroxyl groups in double-stranded DNA using NAD as a coenzyme and as the energy source for the reaction. It is essential for DNA replication and repair of damaged DNA. The protein is DNA ligase of Desulfatibacillum aliphaticivorans.